A 372-amino-acid chain; its full sequence is Alanine dehydrogenase 1 (372 aa).

His94 is a catalytic residue. 170–200 (TYVIFGGGVAATNAANVALGLNAKVIIIELN) contributes to the NAD(+) binding site.

It belongs to the AlaDH/PNT family.

It catalyses the reaction L-alanine + NAD(+) + H2O = pyruvate + NH4(+) + NADH + H(+). The protein operates within amino-acid degradation; L-alanine degradation via dehydrogenase pathway; NH(3) and pyruvate from L-alanine: step 1/1. Its function is as follows. May play a role in cell wall synthesis as L-alanine is an important constituent of the peptidoglycan layer. The polypeptide is Alanine dehydrogenase 1 (ald1) (Staphylococcus aureus (strain NCTC 8325 / PS 47)).